Reading from the N-terminus, the 119-residue chain is Large ribosomal subunit protein bL20 (119 aa).

Belongs to the bacterial ribosomal protein bL20 family.

Functionally, binds directly to 23S ribosomal RNA and is necessary for the in vitro assembly process of the 50S ribosomal subunit. It is not involved in the protein synthesizing functions of that subunit. The protein is Large ribosomal subunit protein bL20 of Neisseria gonorrhoeae (strain ATCC 700825 / FA 1090).